Consider the following 272-residue polypeptide: Phosphate import ATP-binding protein PstB 1 (272 aa).

The region spanning 26–267 is the ABC transporter domain; that stretch reads LEIRNLDLRY…PKKRKTEDYI (242 aa). Residue 58-65 participates in ATP binding; the sequence is GPSGCGKS.

Belongs to the ABC transporter superfamily. Phosphate importer (TC 3.A.1.7) family. In terms of assembly, the complex is composed of two ATP-binding proteins (PstB), two transmembrane proteins (PstC and PstA) and a solute-binding protein (PstS).

Its subcellular location is the cell inner membrane. The enzyme catalyses phosphate(out) + ATP + H2O = ADP + 2 phosphate(in) + H(+). Functionally, part of the ABC transporter complex PstSACB involved in phosphate import. Responsible for energy coupling to the transport system. The sequence is that of Phosphate import ATP-binding protein PstB 1 from Shewanella oneidensis (strain ATCC 700550 / JCM 31522 / CIP 106686 / LMG 19005 / NCIMB 14063 / MR-1).